A 276-amino-acid chain; its full sequence is NADPH-dependent 7-cyano-7-deazaguanine reductase (276 aa).

83–85 (IES) contacts substrate. Residue 85-86 (SK) participates in NADPH binding. Catalysis depends on Cys184, which acts as the Thioimide intermediate. The active-site Proton donor is the Asp191. Residue 223–224 (HE) participates in substrate binding. 252–253 (RG) lines the NADPH pocket.

It belongs to the GTP cyclohydrolase I family. QueF type 2 subfamily. In terms of assembly, homodimer.

The protein resides in the cytoplasm. The enzyme catalyses 7-aminomethyl-7-carbaguanine + 2 NADP(+) = 7-cyano-7-deazaguanine + 2 NADPH + 3 H(+). The protein operates within tRNA modification; tRNA-queuosine biosynthesis. Catalyzes the NADPH-dependent reduction of 7-cyano-7-deazaguanine (preQ0) to 7-aminomethyl-7-deazaguanine (preQ1). In Pseudomonas putida (strain ATCC 700007 / DSM 6899 / JCM 31910 / BCRC 17059 / LMG 24140 / F1), this protein is NADPH-dependent 7-cyano-7-deazaguanine reductase.